A 306-amino-acid polypeptide reads, in one-letter code: Brix domain-containing protein C4F8.04 (306 aa).

The tract at residues 16-49 (KALHQKNKDKLERRKERAKEEEKDPEKKRLRLSE) is disordered. Basic and acidic residues predominate over residues 21 to 42 (KNKDKLERRKERAKEEEKDPEK). Positions 94–283 (PKLLVTTSKR…LRMVQKGVWD (190 aa)) constitute a Brix domain.

In Schizosaccharomyces pombe (strain 972 / ATCC 24843) (Fission yeast), this protein is Brix domain-containing protein C4F8.04.